The primary structure comprises 614 residues: WD repeat-containing protein 26 (614 aa).

Low complexity-rich tracts occupy residues Met-1 to Gly-19 and Ser-34 to Leu-44. The disordered stretch occupies residues Met-1–Ser-65. The LisH domain maps to Ala-67–Leu-99. The CTLH domain maps to Glu-100–Glu-184. WD repeat units follow at residues Glu-306–Lys-345, Gly-352–Arg-391, Ser-397–Glu-437, Gln-477–Lys-516, Gly-519–Glu-561, and Gly-564–Glu-604.

Forms homooligomers. Identified in the CTLH complex that contains at least MAEA, RMND5A (or alternatively its paralog RMND5B), GID8, WDR26, and RANBP9 and/or RANBP10. Interacts with DDB1-CUL4A/B E3 ligase complexes.

The protein localises to the cytoplasm. It is found in the nucleus. It localises to the mitochondrion. Functionally, G-beta-like protein involved in cell signal transduction. Acts as a negative regulator in MAPK signaling pathway. Functions as a scaffolding protein to promote G beta:gamma-mediated PLCB2 plasma membrane translocation and subsequent activation in leukocytes. Core component of the CTLH E3 ubiquitin-protein ligase complex that mediates ubiquitination and subsequent proteasomal degradation of target proteins. Acts as a negative regulator of the canonical Wnt signaling pathway through preventing ubiquitination of beta-catenin CTNNB1 by the beta-catenin destruction complex, thus negatively regulating CTNNB1 degradation. Serves as a scaffold to coordinate PI3K/AKT pathway-driven cell growth and migration. Protects cells from oxidative stress-induced apoptosis via the down-regulation of AP-1 transcriptional activity as well as by inhibiting cytochrome c release from mitochondria. Also protects cells by promoting hypoxia-mediated autophagy and mitophagy. The protein is WD repeat-containing protein 26 (wdr26) of Xenopus tropicalis (Western clawed frog).